We begin with the raw amino-acid sequence, 184 residues long: GMP synthase [glutamine-hydrolyzing] subunit A (184 aa).

The 182-residue stretch at 3–184 (RIVVVDNHGQ…ENFRDICAGD (182 aa)) folds into the Glutamine amidotransferase type-1 domain. Cys73 functions as the Nucleophile in the catalytic mechanism. Active-site residues include His161 and Glu163.

Heterodimer composed of a glutamine amidotransferase subunit (A) and a GMP-binding subunit (B).

The enzyme catalyses XMP + L-glutamine + ATP + H2O = GMP + L-glutamate + AMP + diphosphate + 2 H(+). Its pathway is purine metabolism; GMP biosynthesis; GMP from XMP (L-Gln route): step 1/1. In terms of biological role, catalyzes the synthesis of GMP from XMP. The polypeptide is GMP synthase [glutamine-hydrolyzing] subunit A (Natronomonas pharaonis (strain ATCC 35678 / DSM 2160 / CIP 103997 / JCM 8858 / NBRC 14720 / NCIMB 2260 / Gabara) (Halobacterium pharaonis)).